The primary structure comprises 469 residues: Phosphatidylcholine:ceramide cholinephosphotransferase 1 (469 aa).

Residues 40–177 (TTKIGPKLET…GDKPASPHDR (138 aa)) form a disordered region. Composition is skewed to basic and acidic residues over residues 72–91 (AAEKVEKQHDDDGVVVHEET), 100–117 (SHHDKQKPGETKKSGDGK), and 162–177 (VRLEMPGDKPASPHDR). Transmembrane regions (helical) follow at residues 186–206 (LVAFLMLVVAAAGNTITLSWI), 231–251 (LRLCENLMIGSFVSLLVLILF), 262–282 (LCFIGSILYGMRCITMMVTPV), 300–320 (TFSLIVMRGVWSMFGLGLNLF), 327–347 (LCGDYIYSGHTLVLVVSALFI), and 355–375 (FYILHWLSWLVCSVGVIFLVL). His-336 is an active-site residue. Residues 376–469 (SHGHYTIDVI…RNGAARPAFE (94 aa)) are Cytoplasmic-facing. Catalysis depends on residues His-379 and Asp-383.

This sequence belongs to the sphingomyelin synthase family.

The protein resides in the golgi apparatus membrane. The enzyme catalyses an N-acylsphing-4-enine + a 1,2-diacyl-sn-glycero-3-phosphocholine = a sphingomyelin + a 1,2-diacyl-sn-glycerol. The catalysed reaction is an N-acyl-15-methylhexadecasphing-4-enine + a 1,2-diacyl-sn-glycero-3-phosphocholine = an N-acyl-15-methylhexadecasphing-4-enine-1-phosphocholine + a 1,2-diacyl-sn-glycerol. Its pathway is lipid metabolism; sphingolipid metabolism. In terms of biological role, sphingomyelin synthases (SM synthase or SMS) synthesize the sphingolipid sphingomyelin (SM) through transfer of the phosphatidyl head group of 1,2-diacyl-sn-glycero-3-phosphocholine (phosphatidylcholine, PC) on to the primary hydroxyl of ceramide (N-acylsphingoid base), yielding 1,2-diacyl-sn-glycerol (diacylglycerol, DAG) as a side product. Functions as a bidirectional lipid cholinephosphotransferases capable of converting PC and ceramide to SM and DAG and vice versa depending on the respective levels of ceramide and DAG as phosphocholine acceptors, respectively. The chain is Phosphatidylcholine:ceramide cholinephosphotransferase 1 (sms-1) from Caenorhabditis elegans.